Here is a 145-residue protein sequence, read N- to C-terminus: D-aminoacyl-tRNA deacylase (145 aa).

The short motif at 137-138 (GP) is the Gly-cisPro motif, important for rejection of L-amino acids element.

This sequence belongs to the DTD family. As to quaternary structure, homodimer.

The protein localises to the cytoplasm. The catalysed reaction is glycyl-tRNA(Ala) + H2O = tRNA(Ala) + glycine + H(+). The enzyme catalyses a D-aminoacyl-tRNA + H2O = a tRNA + a D-alpha-amino acid + H(+). An aminoacyl-tRNA editing enzyme that deacylates mischarged D-aminoacyl-tRNAs. Also deacylates mischarged glycyl-tRNA(Ala), protecting cells against glycine mischarging by AlaRS. Acts via tRNA-based rather than protein-based catalysis; rejects L-amino acids rather than detecting D-amino acids in the active site. By recycling D-aminoacyl-tRNA to D-amino acids and free tRNA molecules, this enzyme counteracts the toxicity associated with the formation of D-aminoacyl-tRNA entities in vivo and helps enforce protein L-homochirality. This Stutzerimonas stutzeri (strain A1501) (Pseudomonas stutzeri) protein is D-aminoacyl-tRNA deacylase.